The primary structure comprises 323 residues: E3 ubiquitin-protein ligase makorin (323 aa).

C3H1-type zinc fingers lie at residues 1-28 and 29-56; these read MSDRILCKFFVHGSCLKGENCEFSHDSK and DPPNNVCTFYQKRICLYGSRCRYDHVRA. Over residues 62 to 74 the composition is skewed to low complexity; that stretch reads LSSDSESLDRSIS. The tract at residues 62-92 is disordered; the sequence is LSSDSESLDRSISTTPSRHLQQQGDNNDGDK. The segment covering 75-87 has biased composition (polar residues); the sequence is TTPSRHLQQQGDN. A C3H1-type 3 zinc finger spans residues 101-128; that stretch reads PREYPICSFAAAGDCPRGNQCPHMHGDL. Positions 129–158 are makorin-type Cys-His; the sequence is CNTCGKKCLHPFRPEEREEHTKECEKKQKH. An RING-type zinc finger spans residues 170–228; sequence CSVCLDRILSKATPGERKFGLLTECDHPFCIQCIRNWRSSAPVSGMDVNSTLRACPICR. The segment at 257 to 286 adopts a C3H1-type 4 zinc-finger fold; it reads KLRSIDCKHFNFGNGNCPFGASCFYKHAYS.

The catalysed reaction is S-ubiquitinyl-[E2 ubiquitin-conjugating enzyme]-L-cysteine + [acceptor protein]-L-lysine = [E2 ubiquitin-conjugating enzyme]-L-cysteine + N(6)-ubiquitinyl-[acceptor protein]-L-lysine.. It participates in protein modification; protein ubiquitination. In terms of biological role, E3 ubiquitin ligase catalyzing the covalent attachment of ubiquitin moieties onto substrate proteins. The sequence is that of E3 ubiquitin-protein ligase makorin (MKRN) from Arabidopsis thaliana (Mouse-ear cress).